Consider the following 551-residue polypeptide: F-box only protein 31 (551 aa).

A disordered region spans residues 12–38 (QSGGCRRRQQRKGAGNGPELEDEEEED). In terms of domain architecture, F-box spans 58–104 (PRSLLHLPPEILVEIFSSLPGTELPSLAQVCRKFRQILTTDTIWKRR). Zn(2+) contacts are provided by Cys-229, His-237, Cys-253, and His-259. Residues 402–459 (REQRQTGNEEDDGRGAGPDKAEHSQQPAPVLRPANEDANKVDGGDGEEQKPPNVQSFV) form a disordered region. Composition is skewed to basic and acidic residues over residues 414–424 (GRGAGPDKAEH) and 435–451 (ANED…EEQK).

It belongs to the FBXO31 family. In terms of assembly, part of a SCF (SKP1-cullin-F-box) protein ligase complex SCF(FBXO31).

Its subcellular location is the cytoplasm. It functions in the pathway protein modification; protein ubiquitination. In terms of biological role, substrate-recognition component of the SCF(FBXO31) protein ligase complex, which specifically mediates the ubiquitination of proteins amidated at their C-terminus in response to oxidative stress, leading to their degradation by the proteasome. Fbxo31 specifically recognizes and binds C-terminal peptides bearing an amide: C-terminal amidation in response to oxidative stress takes place following protein fragmentation. The SCF(FBXO31) also plays a role in G1 arrest following DNA damage by mediating ubiquitination of phosphorylated cyclin-D1 (ccnd1), promoting its degradation by the proteasome, resulting in G1 arrest. The SCF(FBXO31) complex is however not a major regulator of ccnd1 stability during the G1/S transition. This chain is F-box only protein 31 (fbxo31), found in Xenopus tropicalis (Western clawed frog).